A 434-amino-acid polypeptide reads, in one-letter code: MPNRRGSRNAYYFFVQEKIPELRRRGLPVARVADAIPYCSADWALLREEEKEKYSEMAREWKAAQGKDAGPWEKQKPVSTPLRRPAMLVPKQNVSPPDMSCLSLKSDQALLGGIFYFLNIFSHGELPPHCEQRFLPCEIGCVKYSLQEGIMADFHSFINPGEIPRGFRFHCQAASDSSHKIPISHFESGHDQATVLQNLYRFIRPNSGKWPPIYCKSDDRARVNWCLKYMAKSSEITQDLELVTVEDLVVGIYQQKFLKEPSKTWVRSLLDVAMWDYSSNTRCKWHEENDILFCALAVCRKIAYCISNSLATLLGIQLTEAHVPLQDYETSNSVTPKMVVLDAGRYQKLRVESSGFSHFSSSNQEQRSNTPTGDYPSGVKISGQSSSVRGRGITRLLESISNSSSNIHKFSTCESSLSPYMSQKDGYKSFSSLS.

The HMG box DNA-binding region spans 4–73; the sequence is RRGSRNAYYF…AQGKDAGPWE (70 aa). Residues 357–387 are disordered; it reads SHFSSSNQEQRSNTPTGDYPSGVKISGQSSS. Residues 363–372 show a composition bias toward polar residues; it reads NQEQRSNTPT.

The protein belongs to the maelstrom family. As to quaternary structure, interacts with SMARCB1, SIN3B and DDX4. Interacts with piRNA-associated proteins TDRD1, PIWIL1 and PIWIL2. Interacts with TEX19.

Its subcellular location is the cytoplasm. The protein localises to the nucleus. In terms of biological role, plays a central role during spermatogenesis by repressing transposable elements and preventing their mobilization, which is essential for the germline integrity. Acts via the piRNA metabolic process, which mediates the repression of transposable elements during meiosis by forming complexes composed of piRNAs and Piwi proteins and governs the methylation and subsequent repression of transposons. Its association with piP-bodies suggests a participation in the secondary piRNAs metabolic process. Required for the localization of germ-cell factors to the meiotic nuage. The chain is Protein maelstrom homolog (MAEL) from Sus scrofa (Pig).